A 205-amino-acid polypeptide reads, in one-letter code: UPF0301 protein Bind_0718 (205 aa).

Belongs to the UPF0301 (AlgH) family.

In Beijerinckia indica subsp. indica (strain ATCC 9039 / DSM 1715 / NCIMB 8712), this protein is UPF0301 protein Bind_0718.